We begin with the raw amino-acid sequence, 281 residues long: Pantothenate synthetase (281 aa).

Residue 30–37 (MGYLHEGH) participates in ATP binding. The Proton donor role is filled by H37. Position 61 (Q61) interacts with (R)-pantoate. Q61 lines the beta-alanine pocket. 147 to 150 (GEKD) contributes to the ATP binding site. Q153 is a (R)-pantoate binding site. Residues I176 and 184–187 (KSSR) contribute to the ATP site.

Belongs to the pantothenate synthetase family. Homodimer.

It localises to the cytoplasm. The catalysed reaction is (R)-pantoate + beta-alanine + ATP = (R)-pantothenate + AMP + diphosphate + H(+). Its pathway is cofactor biosynthesis; (R)-pantothenate biosynthesis; (R)-pantothenate from (R)-pantoate and beta-alanine: step 1/1. Its function is as follows. Catalyzes the condensation of pantoate with beta-alanine in an ATP-dependent reaction via a pantoyl-adenylate intermediate. This chain is Pantothenate synthetase, found in Clostridium botulinum (strain Loch Maree / Type A3).